We begin with the raw amino-acid sequence, 391 residues long: MSRFLICSFALVLLYPAGIDMYLVGLPRIAADLNASEAQLHIAFSVYLAGMAAAMLFAGKVADRSGRKPVAIPGAALFIIASVFCSLAETSTLFLAGRFLQGLGAGCCYVVAFAILRDTLDDRRRAKVLSLLNGITCIIPVLAPVLGHLIMLKFPWQSLFWAMAMMGIAVLMLSLFILKETRPASPAASDKPRENSESLLNRFFLSRVVITTLSVSVILTFVNTSPVLLMEIMGFERGEYATIMALTAGVSMTFSFSTPFALGIFKPRTLMITSQVLFLAAGITLAVSPSHAVSLFGITLICAGFSVGFGVAMSQALGPFSLRAGVASSTLGIAQVCGSSLWIWLAAVVGIGAWNMLIGILIACSIVSLLLIMFVAPGRPVAAHEEIHHHA.

Topologically, residues 1–3 (MSR) are cytoplasmic. A helical membrane pass occupies residues 4-24 (FLICSFALVLLYPAGIDMYLV). The Periplasmic segment spans residues 25-41 (GLPRIAADLNASEAQLH). Residues 42 to 62 (IAFSVYLAGMAAAMLFAGKVA) form a helical membrane-spanning segment. Residues 63–68 (DRSGRK) are Cytoplasmic-facing. The chain crosses the membrane as a helical span at residues 69 to 89 (PVAIPGAALFIIASVFCSLAE). Topologically, residues 90-92 (TST) are periplasmic. A helical transmembrane segment spans residues 93 to 113 (LFLAGRFLQGLGAGCCYVVAF). At 114–130 (AILRDTLDDRRRAKVLS) the chain is on the cytoplasmic side. A helical transmembrane segment spans residues 131–151 (LLNGITCIIPVLAPVLGHLIM). The Periplasmic segment spans residues 152 to 157 (LKFPWQ). Residues 158-178 (SLFWAMAMMGIAVLMLSLFIL) form a helical membrane-spanning segment. Residues 179-202 (KETRPASPAASDKPRENSESLLNR) are Cytoplasmic-facing. A helical transmembrane segment spans residues 203–222 (FFLSRVVITTLSVSVILTFV). Residues 223-244 (NTSPVLLMEIMGFERGEYATIM) are Periplasmic-facing. The chain crosses the membrane as a helical span at residues 245-265 (ALTAGVSMTFSFSTPFALGIF). The Cytoplasmic portion of the chain corresponds to 266-268 (KPR). A helical transmembrane segment spans residues 269-289 (TLMITSQVLFLAAGITLAVSP). The Periplasmic portion of the chain corresponds to 290–292 (SHA). A helical transmembrane segment spans residues 293–313 (VSLFGITLICAGFSVGFGVAM). Residues 314–330 (SQALGPFSLRAGVASST) are Cytoplasmic-facing. A helical transmembrane segment spans residues 331–351 (LGIAQVCGSSLWIWLAAVVGI). The Periplasmic segment spans residues 352–355 (GAWN). The helical transmembrane segment at 356-376 (MLIGILIACSIVSLLLIMFVA) threads the bilayer. Residues 377-391 (PGRPVAAHEEIHHHA) are Cytoplasmic-facing.

Belongs to the major facilitator superfamily. DHA1 family. MdtL (TC 2.A.1.2.22) subfamily.

Its subcellular location is the cell inner membrane. This is Multidrug resistance protein MdtL (mdtL) from Shigella flexneri.